A 116-amino-acid chain; its full sequence is Protein BIC2 (116 aa).

2 disordered regions span residues M1–P33 and D95–C116.

It localises to the nucleus. Its function is as follows. Regulates the blue-light dependent dimerization of CRY2 and formation of photobodies. Inhibits CRY phosphorylation. The polypeptide is Protein BIC2 (Arabidopsis thaliana (Mouse-ear cress)).